The sequence spans 187 residues: Adenylate kinase (187 aa).

Position 10–15 (10–15 (GSGKGT)) interacts with ATP. Residues 30-59 (STGDMLRAEIAAGSELGKQAKAVMDAGNLV) are NMP. AMP-binding positions include threonine 31, arginine 36, 57–59 (NLV), 85–88 (GYPR), and glutamine 92. An LID region spans residues 126–136 (GRAKEQGRADD). Residue arginine 127 participates in ATP binding. Arginine 133 and arginine 144 together coordinate AMP. Glycine 172 contacts ATP.

This sequence belongs to the adenylate kinase family. As to quaternary structure, monomer.

The protein resides in the cytoplasm. It carries out the reaction AMP + ATP = 2 ADP. The protein operates within purine metabolism; AMP biosynthesis via salvage pathway; AMP from ADP: step 1/1. Its function is as follows. Catalyzes the reversible transfer of the terminal phosphate group between ATP and AMP. Plays an important role in cellular energy homeostasis and in adenine nucleotide metabolism. The sequence is that of Adenylate kinase from Stenotrophomonas maltophilia (strain R551-3).